Here is a 147-residue protein sequence, read N- to C-terminus: uncharacterized protein (147 aa).

The HTH LytTR-type domain occupies 44-147 (LVGYIDKEIH…LKSIKERLSI (104 aa)).

The protein resides in the cytoplasm. This is an uncharacterized protein from Staphylococcus aureus (strain MRSA252).